Here is a 305-residue protein sequence, read N- to C-terminus: Protein FdhE homolog (305 aa).

The protein belongs to the FdhE family.

It is found in the cytoplasm. Necessary for formate dehydrogenase activity. This chain is Protein FdhE homolog, found in Actinobacillus pleuropneumoniae serotype 7 (strain AP76).